Reading from the N-terminus, the 328-residue chain is L-lactate dehydrogenase (328 aa).

NAD(+) contacts are provided by residues Val18, Glu39, Lys46, Tyr71, and 85-86 (GA). Gln88 and Arg94 together coordinate substrate. NAD(+) is bound by residues Ser107, 124-126 (AAN), and Ser149. Substrate is bound at residue 126–129 (NPVD). Position 154–157 (154–157 (DSAR)) interacts with substrate. Arg159 and His174 together coordinate beta-D-fructose 1,6-bisphosphate. The Proton acceptor role is filled by His181. Residue Tyr226 is modified to Phosphotyrosine. Thr235 is a substrate binding site.

The protein belongs to the LDH/MDH superfamily. LDH family. In terms of assembly, homotetramer.

The protein resides in the cytoplasm. It catalyses the reaction (S)-lactate + NAD(+) = pyruvate + NADH + H(+). It participates in fermentation; pyruvate fermentation to lactate; (S)-lactate from pyruvate: step 1/1. With respect to regulation, allosterically activated by fructose 1,6-bisphosphate (FBP). In terms of biological role, catalyzes the conversion of lactate to pyruvate. The chain is L-lactate dehydrogenase from Streptococcus thermophilus (strain ATCC BAA-250 / LMG 18311).